We begin with the raw amino-acid sequence, 291 residues long: Small ribosomal subunit biogenesis GTPase RsgA (291 aa).

The CP-type G domain occupies 63–221 (KNELKRPPVS…IADTPGFSAL (159 aa)). GTP is bound by residues 112–115 (TKKD) and 164–172 (GQSGVGKST). Residues C245, C250, H252, and C258 each contribute to the Zn(2+) site.

The protein belongs to the TRAFAC class YlqF/YawG GTPase family. RsgA subfamily. Monomer. Associates with 30S ribosomal subunit, binds 16S rRNA. Zn(2+) serves as cofactor.

It localises to the cytoplasm. In terms of biological role, one of several proteins that assist in the late maturation steps of the functional core of the 30S ribosomal subunit. Helps release RbfA from mature subunits. May play a role in the assembly of ribosomal proteins into the subunit. Circularly permuted GTPase that catalyzes slow GTP hydrolysis, GTPase activity is stimulated by the 30S ribosomal subunit. This chain is Small ribosomal subunit biogenesis GTPase RsgA, found in Staphylococcus aureus (strain MRSA252).